Consider the following 154-residue polypeptide: 6,7-dimethyl-8-ribityllumazine synthase (154 aa).

5-amino-6-(D-ribitylamino)uracil-binding positions include F15, T47 to D49, and A71 to I73. E76 to T77 contributes to the (2S)-2-hydroxy-3-oxobutyl phosphate binding site. The active-site Proton donor is the H79. A 5-amino-6-(D-ribitylamino)uracil-binding site is contributed by L104. R119 contributes to the (2S)-2-hydroxy-3-oxobutyl phosphate binding site.

This sequence belongs to the DMRL synthase family.

The enzyme catalyses (2S)-2-hydroxy-3-oxobutyl phosphate + 5-amino-6-(D-ribitylamino)uracil = 6,7-dimethyl-8-(1-D-ribityl)lumazine + phosphate + 2 H2O + H(+). Its pathway is cofactor biosynthesis; riboflavin biosynthesis; riboflavin from 2-hydroxy-3-oxobutyl phosphate and 5-amino-6-(D-ribitylamino)uracil: step 1/2. Functionally, catalyzes the formation of 6,7-dimethyl-8-ribityllumazine by condensation of 5-amino-6-(D-ribitylamino)uracil with 3,4-dihydroxy-2-butanone 4-phosphate. This is the penultimate step in the biosynthesis of riboflavin. In Saccharolobus islandicus (strain L.S.2.15 / Lassen #1) (Sulfolobus islandicus), this protein is 6,7-dimethyl-8-ribityllumazine synthase.